Consider the following 474-residue polypeptide: Phenolic acid decarboxylase (474 aa).

Mn(2+)-binding residues include Asn-161, His-182, and Glu-224. Prenylated FMN-binding positions include Asn-161–Arg-166 and Met-181–His-182. The active-site Proton donor is the Glu-273.

The protein belongs to the UbiD family. YclC subfamily. Requires prenylated FMN as cofactor. It depends on Mn(2+) as a cofactor.

The catalysed reaction is vanillate + H(+) = guaiacol + CO2. Functionally, involved in the non-oxidative decarboxylation and detoxification of phenolic derivatives under both aerobic and anaerobic conditions. Phenolic acid decarboxylase that catalyzes the reversible decarboxylation of vanillate. In Streptomyces sp. (strain D7), this protein is Phenolic acid decarboxylase.